The chain runs to 99 residues: MSFVMAYPEMLAAAADTLQSIGATTVASNAAAAAPTTGVVPPAADEVSALTAAHFAAHAAMYQSVSARAAAIHDQFVATLASSASSYAATEVANAAAAS.

Residues 1 to 93 (MSFVMAYPEM…ASSYAATEVA (93 aa)) enclose the PE domain.

It belongs to the mycobacterial PE family.

It is found in the secreted. The protein resides in the cell wall. Functionally, may play a pivotal role in the interaction between M.tuberculosis and host. Can enhance the survival within macrophages under stress conditions such as H(2)O(2), SDS and low pH. Increases the production of IL-6 and IL-1beta from macrophages, and decreases the secretion of suppressor of cytokine signaling 3 (SOCS-3). These changes probably involve the p38-ERK-NF-kappa-B signaling pathway. Also precipitates the macrophage death. In Mycobacterium tuberculosis (strain ATCC 25618 / H37Rv), this protein is PE family protein PE13.